A 239-amino-acid chain; its full sequence is MENLNIVTLTGAGISAESGIPTFRGKDGLWNKFKPEELATPEAFFRNPKLVWEWYDWKRQLIAKAQPNEGHKILTKMEEEFPNFYLITQNVDGLHQRAGSKKVIELHGNIWKVRCVECGNERYEYTTPLPEIPPKCEKCGGLLRPGVVWFGESLPVDALSRAYELSREAHVFIVVGTSGVVYPAAELPFVAKENGAQVIEVNPEETPITKIADMHFKEKASTGLKKVYDYLREKYGSKG.

Residues 1–234 enclose the Deacetylase sirtuin-type domain; the sequence is MENLNIVTLT…KKVYDYLREK (234 aa). NAD(+) is bound by residues 11-30 and 89-92; these read GAGI…DGLW and QNVD. H107 functions as the Proton acceptor in the catalytic mechanism. C115, C118, C136, and C139 together coordinate Zn(2+). Residues 176 to 178, 202 to 204, and A220 contribute to the NAD(+) site; these read GTS and NPE.

This sequence belongs to the sirtuin family. Class III subfamily. Zn(2+) is required as a cofactor.

It is found in the cytoplasm. It catalyses the reaction N(6)-acetyl-L-lysyl-[protein] + NAD(+) + H2O = 2''-O-acetyl-ADP-D-ribose + nicotinamide + L-lysyl-[protein]. Its function is as follows. NAD-dependent protein deacetylase which modulates the activities of several proteins which are inactive in their acetylated form. This chain is NAD-dependent protein deacylase, found in Aquifex aeolicus (strain VF5).